Here is a 1230-residue protein sequence, read N- to C-terminus: Potassium channel subfamily T member 1 (1230 aa).

A disordered region spans residues 1–37; the sequence is MARAKLPRSPSEGKAGPGGAPAGAAAPEEPHGLSPLL. At 1–93 the chain is on the cytoplasmic side; it reads MARAKLPRSP…LFFIKNQRSS (93 aa). Residues 94 to 126 traverse the membrane as a helical segment; that stretch reads LRIRLFNFSLKLLTCLLYIVRVLLDDPALGIGC. Residues 127–153 are Extracellular-facing; sequence WGCPKQNYSFNDSSSEINWAPILWVER. Residues Asn-133 and Asn-137 are each glycosylated (N-linked (GlcNAc...) asparagine). A helical transmembrane segment spans residues 154 to 178; it reads KMTLWAIQVIVAIISFLETMLLIYL. The Cytoplasmic portion of the chain corresponds to 179–192; that stretch reads SYKGNIWEQIFRVS. Residues 193-208 form a helical membrane-spanning segment; the sequence is FVLEMINTLPFIITIF. Residues 209-215 are Extracellular-facing; the sequence is WPPLRNL. The chain crosses the membrane as a helical span at residues 216 to 233; that stretch reads FIPVFLNCWLAKHALENM. The Cytoplasmic segment spans residues 234-246; the sequence is INDFHRAILRTQS. The chain crosses the membrane as a helical span at residues 247–274; sequence AMFNQVLILFCTLLCLVFTGTCGIQHLE. Topologically, residues 275-281 are extracellular; it reads RAGENLS. Positions 282-302 form an intramembrane region, pore-forming; it reads LLTSFYFCIVTFSTVGYGDVT. Residues Val-296 and Gly-297 each contribute to the K(+) site. Residues 303-304 lie on the Extracellular side of the membrane; sequence PK. A helical membrane pass occupies residues 305-338; the sequence is IWPSQLLVVIMICVALVVLPLQFEELVYLWMERQ. Over 339 to 1230 the chain is Cytoplasmic; sequence KSGGNYSRHR…NPETRDETQL (892 aa). Residues 352–488 form the RCK N-terminal 1 domain; it reads EKHVVLCVSS…FHVKFADHVV (137 aa). 4 residues coordinate Na(+): Leu-513, His-516, Ser-538, and Asn-540. Positions 660–689 are disordered; the sequence is TEHRPTQSGGGGGGSKLALPTENGSGSRRP. Zn(2+) is bound by residues Cys-758 and Cys-759. Positions 761 and 764 each coordinate K(+). Arg-761 and Lys-764 together coordinate Na(+). 2 residues coordinate Zn(2+): Cys-766 and His-768. Residues Asn-769, Tyr-771, Tyr-777, and Gly-778 each coordinate K(+). Residue Tyr-771 coordinates Na(+). Phe-779 contributes to the Na(+) binding site. The RCK N-terminal 2 domain maps to 781–921; the sequence is NKLIIVSAET…QFRAKDSYSL (141 aa). The K(+) site is built by Ser-787, Leu-818, Asp-820, Gly-842, and Asp-865. 2 disordered regions span residues 1048–1078 and 1204–1230; these read EVKGPWGSRAGTGGSSQGRHTGGGDPAEHPL and SSSQSRKSSCSHKLSSCNPETRDETQL. Gly residues predominate over residues 1057-1072; sequence AGTGGSSQGRHTGGGD. The span at 1204-1219 shows a compositional bias: low complexity; sequence SSSQSRKSSCSHKLSS.

The protein belongs to the potassium channel family. Calcium-activated (TC 1.A.1.3) subfamily. KCa4.1/KCNT1 sub-subfamily. Homotetramer; which constitutes the Na(+)-activated K(+) channel. Interacts with KCNT2; these heterodimer channels differ from the homomers in their unitary conductance, kinetic behavior, subcellular localization, and response to activation of protein kinase C. Interacts (via C-terminus) with FMR1; this interaction alters gating properties of KCNT1. Interacts with CRBN via its cytoplasmic C-terminus. In terms of processing, phosphorylated by protein kinase C. Phosphorylation of the C-terminal domain increases channel activity. Highest expression in liver, brain and spinal cord. Lowest expression in skeletal muscle.

The protein localises to the cell membrane. The enzyme catalyses K(+)(in) = K(+)(out). With respect to regulation, activated by high intracellular Na(+). In addition to activation by Na(+), is cooperatively activated by intracellular Cl(-) levels. Inhibited by Zn(2+). Activated upon stimulation of G-protein coupled receptors, such as CHRM1 and GRIA1. Its function is as follows. Sodium-activated K(+) channel. Acts as an important mediator of neuronal membrane excitability. Contributes to the delayed outward currents. Regulates neuronal bursting in sensory neurons. Contributes to synaptic development and plasticity. In Homo sapiens (Human), this protein is Potassium channel subfamily T member 1.